Consider the following 201-residue polypeptide: Ras-related protein Rab-1B (201 aa).

M1 carries the N-acetylmethionine modification. The GTP site is built by S17, G18, V19, G20, K21, S22, C23, Y33, T34, E35, S36, S39, and T40. S22 contributes to the Mg(2+) binding site. Residues 30–45 (DDTYTESYISTIGVDF) carry the Switch 1 motif. The Mg(2+) site is built by T40 and D63. The segment at 64–83 (TAGQERGRTITSSYYRGAHG) is switch 2 region; required for interaction with REP1/CHM. Residues 65 to 80 (AGQERGRTITSSYYRG) carry the Switch 2 motif. GTP is bound by residues G66, N121, K122, D124, S151, A152, and K153. The segment at 173 to 201 (MGPGAASGGERPNLKIDSTPVKQAGGGCC) is disordered. Residues C200 and C201 are each lipidated (S-geranylgeranyl cysteine). C201 carries the cysteine methyl ester modification.

Belongs to the small GTPase superfamily. Rab family. As to quaternary structure, interacts with MICAL1 and MICAL2. Interacts (in GTP-bound form) with MICALCL, MICAL1 and MILCAL3. Interacts with GDI1; the interaction requires the GDP-bound state. Interacts with CHM/REP1; the interaction requires the GDP-bound form and is necessary for prenylation by GGTase II. Interacts with RabGAP TBC1D20. Interacts (in GDP-bound form) with lipid phosphatase MTMR6 (via GRAM domain); the interaction regulates MTMR6 recruitment to the endoplasmic reticulum-Golgi intermediate compartment. Interacts (in GDP-bound form) with lipid phosphatase MTMR7. The cofactor is Mg(2+). Post-translationally, prenylated; by GGTase II, only after interaction of the substrate with Rab escort protein 1 (REP1).

The protein localises to the cytoplasm. The protein resides in the membrane. It is found in the preautophagosomal structure membrane. Its subcellular location is the perinuclear region. It carries out the reaction GTP + H2O = GDP + phosphate + H(+). Regulated by guanine nucleotide exchange factors (GEFs) which promote the exchange of bound GDP for free GTP. Regulated by GTPase activating proteins (GAPs) including TBC1D20 which increases the GTP hydrolysis activity. Inhibited by GDP dissociation inhibitors (GDIs). Functionally, the small GTPases Rab are key regulators of intracellular membrane trafficking, from the formation of transport vesicles to their fusion with membranes. Rabs cycle between an inactive GDP-bound form and an active GTP-bound form that is able to recruit to membranes different set of downstream effectors directly responsible for vesicle formation, movement, tethering and fusion. Plays a role in the initial events of the autophagic vacuole development which take place at specialized regions of the endoplasmic reticulum. Regulates vesicular transport between the endoplasmic reticulum and successive Golgi compartments. Required to modulate the compacted morphology of the Golgi. Promotes the recruitment of lipid phosphatase MTMR6 to the endoplasmic reticulum-Golgi intermediate compartment. The sequence is that of Ras-related protein Rab-1B (RAB1B) from Sus scrofa (Pig).